The sequence spans 163 residues: UPF0134 protein MPN_139 (163 aa).

It belongs to the UPF0134 family.

The polypeptide is UPF0134 protein MPN_139 (Mycoplasma pneumoniae (strain ATCC 29342 / M129 / Subtype 1) (Mycoplasmoides pneumoniae)).